The sequence spans 276 residues: MACERLGGQSGAADVDAAAPAMAAVNLTLGFAGKTVLDQVSMGFPARAVTSLMGPTGSGKTTFLRTLNRMNDKVSGYRYSGDVLLGGRSIFNYRDVLEFRRRVGMLFQRPNPFPMSIMDNVLAGVRAHKLVPRKEFRGVAQARLTEVGLWDAVKDRLSDSPFRLSGGQQQLLCLARTLAVNPEVLLLDEPTSALDPTTTEKIEEFIRSLADRLTVIIVTHNLAQAARISDRAALFFDGRLVEEGPTEQLFSSPKHAETARYVAGLSGDVKDAKRGN.

The ABC transporter domain occupies 22-262 (MAAVNLTLGF…PKHAETARYV (241 aa)). 54–61 (GPTGSGKT) contacts ATP.

Belongs to the ABC transporter superfamily. Phosphate importer (TC 3.A.1.7) family. In terms of assembly, the complex is composed of two ATP-binding proteins (PstB), two transmembrane proteins (PstC and PstA) and a solute-binding protein (PstS).

Its subcellular location is the cell membrane. The catalysed reaction is phosphate(out) + ATP + H2O = ADP + 2 phosphate(in) + H(+). Part of the ABC transporter complex PstSACB involved in phosphate import. Responsible for energy coupling to the transport system. This Mycobacterium bovis (strain ATCC BAA-935 / AF2122/97) protein is Phosphate import ATP-binding protein PstB 2.